The chain runs to 61 residues: Alpha-conotoxine-like Am1.3 (61 aa).

A signal peptide spans 1–21 (MGMRMMFTVFLLVVLATTVVS). Positions 22 to 44 (FMSGRASHGRNAAASDLIALTIK) are excised as a propeptide. C60 bears the Cysteine amide mark.

Belongs to the conotoxin A superfamily. Is not hydroxylated. In terms of processing, contains 2 disulfide bonds. As to expression, expressed by the venom duct.

The protein resides in the secreted. In terms of biological role, alpha-conotoxins act on postsynaptic membranes, they bind to the nicotinic acetylcholine receptors (nAChR) and thus inhibit them. The polypeptide is Alpha-conotoxine-like Am1.3 (Conus amadis (Amadis cone)).